The chain runs to 187 residues: dCTP deaminase, dUMP-forming (187 aa).

DCTP-binding positions include 99 to 104 (KSSIAR), aspartate 117, 125 to 127 (TLE), glutamine 146, tyrosine 159, lysine 166, and glutamine 170. Glutamate 127 (proton donor/acceptor) is an active-site residue.

This sequence belongs to the dCTP deaminase family. Homotrimer.

It carries out the reaction dCTP + 2 H2O = dUMP + NH4(+) + diphosphate. It participates in pyrimidine metabolism; dUMP biosynthesis; dUMP from dCTP: step 1/1. In terms of biological role, bifunctional enzyme that catalyzes both the deamination of dCTP to dUTP and the hydrolysis of dUTP to dUMP without releasing the toxic dUTP intermediate. The chain is dCTP deaminase, dUMP-forming from Methanoculleus marisnigri (strain ATCC 35101 / DSM 1498 / JR1).